Consider the following 316-residue polypeptide: tRNA selenocysteine 1-associated protein 1-like (316 aa).

RRM domains lie at 6–89 (TSLW…YATY) and 99–178 (FSVF…IAVN). Positions 239-248 (PPMGMPPMPP) are enriched in pro residues. The interval 239–285 (PPMGMPPMPPDMQGSTEAHDGTEEVEEDPSEDPNPQVDVEELNRQYM) is disordered.

This sequence belongs to the RRM TRSPAP family.

Its subcellular location is the nucleus. The protein localises to the cytoplasm. In terms of biological role, involved in the early steps of selenocysteine biosynthesis and tRNA(Sec) charging to the later steps resulting in the cotranslational incorporation of selenocysteine into selenoproteins. The chain is tRNA selenocysteine 1-associated protein 1-like (trnau1apl) from Danio rerio (Zebrafish).